A 129-amino-acid chain; its full sequence is Glycine cleavage system H protein (129 aa).

The 82-residue stretch at Ser-23 to Lys-104 folds into the Lipoyl-binding domain. Lys-64 carries the N6-lipoyllysine modification.

The protein belongs to the GcvH family. As to quaternary structure, the glycine cleavage system is composed of four proteins: P, T, L and H. It depends on (R)-lipoate as a cofactor.

The glycine cleavage system catalyzes the degradation of glycine. The H protein shuttles the methylamine group of glycine from the P protein to the T protein. In Nitrosomonas europaea (strain ATCC 19718 / CIP 103999 / KCTC 2705 / NBRC 14298), this protein is Glycine cleavage system H protein.